The sequence spans 585 residues: Eukaryotic translation initiation factor 3 subunit D (585 aa).

The span at L43–G60 shows a compositional bias: basic and acidic residues. 2 disordered regions span residues L43 to Q62 and R109 to A152. Over residues R109–A130 the composition is skewed to gly residues. The tract at residues S300–P314 is RNA gate. Residues V560 to E585 are disordered. The span at F565–E585 shows a compositional bias: acidic residues.

Belongs to the eIF-3 subunit D family. In terms of assembly, component of the eukaryotic translation initiation factor 3 (eIF-3) complex.

The protein localises to the cytoplasm. In terms of biological role, mRNA cap-binding component of the eukaryotic translation initiation factor 3 (eIF-3) complex, which is involved in protein synthesis of a specialized repertoire of mRNAs and, together with other initiation factors, stimulates binding of mRNA and methionyl-tRNAi to the 40S ribosome. The eIF-3 complex specifically targets and initiates translation of a subset of mRNAs involved in cell proliferation. In the eIF-3 complex, eif3d specifically recognizes and binds the 7-methylguanosine cap of a subset of mRNAs. This is Eukaryotic translation initiation factor 3 subunit D from Neosartorya fischeri (strain ATCC 1020 / DSM 3700 / CBS 544.65 / FGSC A1164 / JCM 1740 / NRRL 181 / WB 181) (Aspergillus fischerianus).